Reading from the N-terminus, the 844-residue chain is 3',5'-cyclic-AMP phosphodiesterase 4A (844 aa).

A disordered region spans residues 1 to 124; the sequence is MEPPAAPSER…RSPLDSQASP (124 aa). Position 13 is a phosphoserine (Ser13). Positions 36 to 46 are enriched in low complexity; sequence QPRTPIRIQQR. The span at 51–78 shows a compositional bias: basic and acidic residues; that stretch reads SAERSEPERSPHRPIERADAVDTGDRPG. The segment covering 82-91 has biased composition (polar residues); it reads TRMSWPSSFH. Phosphoserine is present on residues Ser147, Ser152, Ser160, Ser204, and Ser333. The region spanning 343-672 is the PDEase domain; sequence VKTDQEDLLA…DWYHSAIRQS (330 aa). Lys344 is covalently cross-linked (Glycyl lysine isopeptide (Lys-Gly) (interchain with G-Cter in SUMO)). The Proton donor role is filled by His419. His419 contacts 3',5'-cyclic AMP. AMP-binding residues include His419 and His423. The Zn(2+) site is built by His423, His459, Asp460, and Asp577. Positions 460, 577, 628, and 631 each coordinate AMP. Asp460 is a Mg(2+) binding site. Residue Asp460 coordinates Mn(2+). Positions 628 and 631 each coordinate 3',5'-cyclic AMP. Residues Ser672 and Ser674 each carry the phosphoserine modification. Residues 819–844 form a disordered region; it reads ACSGTSGDNSAVISAPGRWGSGGDPA. The segment covering 820–830 has biased composition (polar residues); the sequence is CSGTSGDNSAV.

Belongs to the cyclic nucleotide phosphodiesterase family. PDE4 subfamily. In terms of assembly, interacts with LYN (via SH3 domain). Interacts with ARRB2. It depends on Zn(2+) as a cofactor. Mg(2+) serves as cofactor. Mn(2+) is required as a cofactor. Proteolytically cleaved by CASP3.

It is found in the cytoplasm. The protein resides in the cytosol. Its subcellular location is the membrane. It catalyses the reaction 3',5'-cyclic AMP + H2O = AMP + H(+). It functions in the pathway purine metabolism; 3',5'-cyclic AMP degradation; AMP from 3',5'-cyclic AMP: step 1/1. Inhibited by rolipram and diazepam. Functionally, hydrolyzes the second messenger 3',5'-cyclic AMP (cAMP), which is a key regulator of many important physiological processes. Its function is as follows. Efficiently hydrolyzes cAMP. The sequence is that of 3',5'-cyclic-AMP phosphodiesterase 4A (Pde4a) from Mus musculus (Mouse).